A 249-amino-acid polypeptide reads, in one-letter code: tRNA (guanine-N(1)-)-methyltransferase (249 aa).

Residues glycine 112 and 132 to 137 contribute to the S-adenosyl-L-methionine site; that span reads LGDFVL.

Belongs to the RNA methyltransferase TrmD family. Homodimer.

It is found in the cytoplasm. It catalyses the reaction guanosine(37) in tRNA + S-adenosyl-L-methionine = N(1)-methylguanosine(37) in tRNA + S-adenosyl-L-homocysteine + H(+). Specifically methylates guanosine-37 in various tRNAs. The protein is tRNA (guanine-N(1)-)-methyltransferase of Citrifermentans bemidjiense (strain ATCC BAA-1014 / DSM 16622 / JCM 12645 / Bem) (Geobacter bemidjiensis).